An 831-amino-acid chain; its full sequence is Periplasmic nitrate reductase (831 aa).

Positions 1 to 35 (MTISDSRRTFLKASAAAATASAAGIPLANGTAAEA) form a signal peptide, tat-type signal. The 57-residue stretch at 42 to 98 (IRWDKAACRFCGTGCSVLVGTKEGRVVATQGDPDAPVNRGLNCIKGYFLSKIMYGED) folds into the 4Fe-4S Mo/W bis-MGD-type domain. [4Fe-4S] cluster contacts are provided by Cys49, Cys52, Cys56, and Cys84. Residues Lys86, Gln153, Asn178, Cys182, 215 to 222 (WGSNMAEM), 246 to 250 (STYEH), 265 to 267 (QTD), Met375, Gln379, Asn485, 511 to 512 (SD), Lys534, Asp561, and 721 to 730 (TGRVLEHWHS) each bind Mo-bis(molybdopterin guanine dinucleotide). Residue Trp797 coordinates substrate. Residues Asn805 and Lys822 each coordinate Mo-bis(molybdopterin guanine dinucleotide).

It belongs to the prokaryotic molybdopterin-containing oxidoreductase family. NasA/NapA/NarB subfamily. Component of the periplasmic nitrate reductase NapAB complex composed of NapA and NapB. The cofactor is [4Fe-4S] cluster. It depends on Mo-bis(molybdopterin guanine dinucleotide) as a cofactor. Post-translationally, predicted to be exported by the Tat system. The position of the signal peptide cleavage has not been experimentally proven.

It is found in the periplasm. The enzyme catalyses 2 Fe(II)-[cytochrome] + nitrate + 2 H(+) = 2 Fe(III)-[cytochrome] + nitrite + H2O. In terms of biological role, catalytic subunit of the periplasmic nitrate reductase complex NapAB. Receives electrons from NapB and catalyzes the reduction of nitrate to nitrite. In Dinoroseobacter shibae (strain DSM 16493 / NCIMB 14021 / DFL 12), this protein is Periplasmic nitrate reductase.